A 440-amino-acid chain; its full sequence is Thymidine phosphorylase (440 aa).

This sequence belongs to the thymidine/pyrimidine-nucleoside phosphorylase family. In terms of assembly, homodimer.

It catalyses the reaction thymidine + phosphate = 2-deoxy-alpha-D-ribose 1-phosphate + thymine. The protein operates within pyrimidine metabolism; dTMP biosynthesis via salvage pathway; dTMP from thymine: step 1/2. Its function is as follows. The enzymes which catalyze the reversible phosphorolysis of pyrimidine nucleosides are involved in the degradation of these compounds and in their utilization as carbon and energy sources, or in the rescue of pyrimidine bases for nucleotide synthesis. This chain is Thymidine phosphorylase, found in Enterobacter sp. (strain 638).